The following is a 337-amino-acid chain: Cholinesterase 2 (337 aa).

Ser-99 (acyl-ester intermediate) is an active-site residue. A disulfide bridge links Cys-153 with Cys-165. Residue Glu-224 is the Charge relay system of the active site. N-linked (GlcNAc...) asparagine glycosylation is present at Asn-290.

This sequence belongs to the type-B carboxylesterase/lipase family.

It catalyses the reaction an acylcholine + H2O = a carboxylate + choline + H(+). The sequence is that of Cholinesterase 2 (CHE2) from Branchiostoma lanceolatum (Common lancelet).